The chain runs to 320 residues: MNAVRGRFAARTVRVKAPGKINVSLDVGPLREDGYHSVASVYLAVSLYEEVAATSTATEGITVSISPASTLDLSDVDIPLDERNLAYKAAAIMADVSEHSTGVHLEITKRVPVAGGMGGGSADAAATLLACDALWNSGLSRDELAHLAAELGADVPFALLGGTAVGLGVGDELSPALAKAQMDWVLVTADYGLSTPEVFRTLDRLRLAEGLTVDEPAAVDPKILQALRSGDADALSRVLVNDLQRASIELAPGLRDTLGLGESCGAIAGLVSGSGPTVALLTHSPEAAAGLAEDLGHHGLNALAVHGPVPGARIISDTLL.

Residue Lys20 is part of the active site. 112-122 contacts ATP; it reads PVAGGMGGGSA. Asp154 is an active-site residue.

The protein belongs to the GHMP kinase family. IspE subfamily.

It catalyses the reaction 4-CDP-2-C-methyl-D-erythritol + ATP = 4-CDP-2-C-methyl-D-erythritol 2-phosphate + ADP + H(+). It participates in isoprenoid biosynthesis; isopentenyl diphosphate biosynthesis via DXP pathway; isopentenyl diphosphate from 1-deoxy-D-xylulose 5-phosphate: step 3/6. Its function is as follows. Catalyzes the phosphorylation of the position 2 hydroxy group of 4-diphosphocytidyl-2C-methyl-D-erythritol. In Arthrobacter sp. (strain FB24), this protein is 4-diphosphocytidyl-2-C-methyl-D-erythritol kinase.